Reading from the N-terminus, the 129-residue chain is Small ribosomal subunit protein uS11 (129 aa).

This sequence belongs to the universal ribosomal protein uS11 family. Part of the 30S ribosomal subunit. Interacts with proteins S7 and S18. Binds to IF-3.

Functionally, located on the platform of the 30S subunit, it bridges several disparate RNA helices of the 16S rRNA. Forms part of the Shine-Dalgarno cleft in the 70S ribosome. This chain is Small ribosomal subunit protein uS11, found in Bacillus cytotoxicus (strain DSM 22905 / CIP 110041 / 391-98 / NVH 391-98).